The primary structure comprises 345 residues: N-acetyl-gamma-glutamyl-phosphate reductase (345 aa).

The active site involves cysteine 149.

Belongs to the NAGSA dehydrogenase family. Type 1 subfamily.

It localises to the cytoplasm. The catalysed reaction is N-acetyl-L-glutamate 5-semialdehyde + phosphate + NADP(+) = N-acetyl-L-glutamyl 5-phosphate + NADPH + H(+). It participates in amino-acid biosynthesis; L-arginine biosynthesis; N(2)-acetyl-L-ornithine from L-glutamate: step 3/4. Functionally, catalyzes the NADPH-dependent reduction of N-acetyl-5-glutamyl phosphate to yield N-acetyl-L-glutamate 5-semialdehyde. The protein is N-acetyl-gamma-glutamyl-phosphate reductase of Geobacillus stearothermophilus (Bacillus stearothermophilus).